A 215-amino-acid polypeptide reads, in one-letter code: Ribonuclease T (215 aa).

Residues 20 to 194 (VVIDVETAGF…YDTERTAVLF (175 aa)) enclose the Exonuclease domain. 4 residues coordinate Mg(2+): Asp-23, Glu-25, His-181, and Asp-186. Residue His-181 is the Proton donor/acceptor of the active site.

Belongs to the RNase T family. Homodimer. Requires Mg(2+) as cofactor.

Functionally, trims short 3' overhangs of a variety of RNA species, leaving a one or two nucleotide 3' overhang. Responsible for the end-turnover of tRNA: specifically removes the terminal AMP residue from uncharged tRNA (tRNA-C-C-A). Also appears to be involved in tRNA biosynthesis, especially in strains lacking other exoribonucleases. A general regulator of small RNAs (sRNA), contributes to their degradation. Upon overexpression suppresses sRNA-mediated RhyB-silencing of multiple RNA targets; overexpression leads to nearly complete loss of RhyB sRNA. The polypeptide is Ribonuclease T (Escherichia coli (strain K12)).